Consider the following 304-residue polypeptide: Protoheme IX farnesyltransferase 2 (304 aa).

9 helical membrane passes run 28–48 (VVALMLITAVVGMSLAPVVDF), 50–70 (WLQAAFGLVGIGLMAGSAAAF), 98–118 (ISVAIFSTALGVIGFVLLYAL), 122–142 (LTAWMTFLSLLGYAVVYTMYL), 150–170 (IVIAGIAGAMPPLLGWTAVTG), 176–196 (AWLLVMIIFIWTPPHFWAIAI), 223–243 (ILLYTILLTLVCILPVLVGMV), 245–265 (SVYLFSSLLLNAGFMYHAWKL), and 282–302 (IYHLLALFVALLADHYLGLFF).

It belongs to the UbiA prenyltransferase family. Protoheme IX farnesyltransferase subfamily.

It localises to the cell inner membrane. It carries out the reaction heme b + (2E,6E)-farnesyl diphosphate + H2O = Fe(II)-heme o + diphosphate. Its pathway is porphyrin-containing compound metabolism; heme O biosynthesis; heme O from protoheme: step 1/1. In terms of biological role, converts heme B (protoheme IX) to heme O by substitution of the vinyl group on carbon 2 of heme B porphyrin ring with a hydroxyethyl farnesyl side group. This Vibrio campbellii (strain ATCC BAA-1116) protein is Protoheme IX farnesyltransferase 2.